The chain runs to 156 residues: Single-stranded DNA-binding protein 1 (156 aa).

The region spanning 1-107 (MNETMICAVG…IDAVAIGHDL (107 aa)) is the SSB domain. Positions 114–124 (FRRTARTEAST) are enriched in low complexity. Residues 114-156 (FRRTARTEASTSPPRPEPNWEVPAGGTPGEPVPEQRPDPVPVG) form a disordered region.

In terms of assembly, homotetramer.

The polypeptide is Single-stranded DNA-binding protein 1 (ssb1) (Streptomyces coelicolor (strain ATCC BAA-471 / A3(2) / M145)).